The sequence spans 426 residues: Histidine--tRNA ligase (426 aa).

This sequence belongs to the class-II aminoacyl-tRNA synthetase family.

The protein resides in the cytoplasm. The enzyme catalyses tRNA(His) + L-histidine + ATP = L-histidyl-tRNA(His) + AMP + diphosphate + H(+). The sequence is that of Histidine--tRNA ligase from Saccharolobus shibatae (strain ATCC 51178 / DSM 5389 / JCM 8931 / NBRC 15437 / B12) (Sulfolobus shibatae).